The primary structure comprises 170 residues: Protein ripply3 (170 aa).

The WRPW motif signature appears at 40-43; sequence WRPW. Residues 79–114 form a ripply homology domain region; the sequence is HPVRLYMPKSKTSEYLQHMGKKVLANFPVQATIHFY. The segment covering 143–152 has biased composition (polar residues); it reads VNSSRGSGDN. The interval 143–170 is disordered; the sequence is VNSSRGSGDNYSVPGGPKRNISSHTGSA.

It belongs to the ripply family. In terms of assembly, interacts with tbx1 and tle4/grg4.

The protein resides in the nucleus. Its function is as follows. Acts as a transcriptional corepressor. Negative regulator of the transcriptional activity of tbx1 that plays a key role in pharyngeal development. Plays a role in the formation of the anteroposterior (AP) axis during embryonic development; required to establish the posterolateral border of the pre-placodal ectoderm (PPE) acting downstream of the retinoic acid receptor (RAR) signaling. The polypeptide is Protein ripply3 (Xenopus tropicalis (Western clawed frog)).